We begin with the raw amino-acid sequence, 548 residues long: Acetolactate synthase isozyme 2 large subunit (548 aa).

E47 is a thiamine diphosphate binding site. FAD-binding positions include R149, 251–272 (HGTK…VGAR), and 294–313 (DIDP…LQGD). The interval 377–457 (QHQMWAAQHI…LKIVLLDNQR (81 aa)) is thiamine pyrophosphate binding. 2 residues coordinate Mg(2+): D428 and N455.

The protein belongs to the TPP enzyme family. As to quaternary structure, tetramer of two large (IlvG) and two small (IlvM) chains. It depends on FAD as a cofactor. Mg(2+) is required as a cofactor. Requires thiamine diphosphate as cofactor.

The catalysed reaction is 2 pyruvate + H(+) = (2S)-2-acetolactate + CO2. Its pathway is amino-acid biosynthesis; L-isoleucine biosynthesis; L-isoleucine from 2-oxobutanoate: step 1/4. The protein operates within amino-acid biosynthesis; L-valine biosynthesis; L-valine from pyruvate: step 1/4. With respect to regulation, inhibited by the herbicides chlorimuron ethyl, chlorsulfuron and imazapyr. In terms of biological role, catalyzes the first step in the biosynthesis of branched-chain amino acids. The protein is Acetolactate synthase isozyme 2 large subunit (ilvG) of Escherichia coli (strain K12).